The sequence spans 284 residues: Large ribosomal subunit protein uL2 (284 aa).

Disordered regions lie at residues 28–50 and 232–284; these read ELKG…FKKS and RGTA…DRRK. Over residues 36-46 the composition is skewed to basic residues; it reads RSVRPNKKLSF. Positions 240-250 are enriched in basic and acidic residues; it reads DHPHGGGEGRH. Over residues 264–284 the composition is skewed to basic residues; it reads KGLKTRDKRKSNKWIVKDRRK.

It belongs to the universal ribosomal protein uL2 family. As to quaternary structure, part of the 50S ribosomal subunit. Forms a bridge to the 30S subunit in the 70S ribosome.

One of the primary rRNA binding proteins. Required for association of the 30S and 50S subunits to form the 70S ribosome, for tRNA binding and peptide bond formation. It has been suggested to have peptidyltransferase activity; this is somewhat controversial. Makes several contacts with the 16S rRNA in the 70S ribosome. This is Large ribosomal subunit protein uL2 from Chlamydia trachomatis serovar L2 (strain ATCC VR-902B / DSM 19102 / 434/Bu).